The chain runs to 1071 residues: Carbamoyl phosphate synthase large chain (1071 aa).

The interval 1–403 (MPKRTDLKSI…SFQKALRGLE (403 aa)) is carboxyphosphate synthetic domain. The ATP site is built by arginine 129, arginine 169, glycine 175, glycine 176, glutamine 208, valine 210, glutamate 215, glycine 241, valine 242, histidine 243, glutamine 285, and glutamate 299. In terms of domain architecture, ATP-grasp 1 spans 133-328 (KEAMEKIGLS…IAKVAAKLAV (196 aa)). Mg(2+)-binding residues include glutamine 285, glutamate 299, and asparagine 301. Mn(2+)-binding residues include glutamine 285, glutamate 299, and asparagine 301. An oligomerization domain region spans residues 404-548 (TGLCGFNPRS…YSTYEEECEA (145 aa)). The carbamoyl phosphate synthetic domain stretch occupies residues 549-930 (RPSDRKKVMI…AYYKAQLGAG (382 aa)). An ATP-grasp 2 domain is found at 673–864 (QKVLNDLGLR…LAKVGARCMA (192 aa)). 10 residues coordinate ATP: arginine 709, phenylalanine 748, leucine 750, glutamate 755, glycine 780, isoleucine 781, histidine 782, serine 783, glutamine 823, and glutamate 835. Residues glutamine 823, glutamate 835, and asparagine 837 each contribute to the Mg(2+) site. The Mn(2+) site is built by glutamine 823, glutamate 835, and asparagine 837. One can recognise an MGS-like domain in the interval 931-1071 (ERLNPTGKIF…ELHGRLKNRS (141 aa)). The segment at 931–1071 (ERLNPTGKIF…ELHGRLKNRS (141 aa)) is allosteric domain.

The protein belongs to the CarB family. In terms of assembly, composed of two chains; the small (or glutamine) chain promotes the hydrolysis of glutamine to ammonia, which is used by the large (or ammonia) chain to synthesize carbamoyl phosphate. Tetramer of heterodimers (alpha,beta)4. Mg(2+) is required as a cofactor. Mn(2+) serves as cofactor.

The catalysed reaction is hydrogencarbonate + L-glutamine + 2 ATP + H2O = carbamoyl phosphate + L-glutamate + 2 ADP + phosphate + 2 H(+). It catalyses the reaction hydrogencarbonate + NH4(+) + 2 ATP = carbamoyl phosphate + 2 ADP + phosphate + 2 H(+). It functions in the pathway amino-acid biosynthesis; L-arginine biosynthesis; carbamoyl phosphate from bicarbonate: step 1/1. It participates in pyrimidine metabolism; UMP biosynthesis via de novo pathway; (S)-dihydroorotate from bicarbonate: step 1/3. Functionally, large subunit of the glutamine-dependent carbamoyl phosphate synthetase (CPSase). CPSase catalyzes the formation of carbamoyl phosphate from the ammonia moiety of glutamine, carbonate, and phosphate donated by ATP, constituting the first step of 2 biosynthetic pathways, one leading to arginine and/or urea and the other to pyrimidine nucleotides. The large subunit (synthetase) binds the substrates ammonia (free or transferred from glutamine from the small subunit), hydrogencarbonate and ATP and carries out an ATP-coupled ligase reaction, activating hydrogencarbonate by forming carboxy phosphate which reacts with ammonia to form carbamoyl phosphate. The chain is Carbamoyl phosphate synthase large chain from Neisseria meningitidis serogroup A / serotype 4A (strain DSM 15465 / Z2491).